Here is a 323-residue protein sequence, read N- to C-terminus: Protein translocase subunit SecF (323 aa).

Residues 1-22 (MAQEYTVEQLNHGRKVYDFMRW) lie on the Cytoplasmic side of the membrane. The chain crosses the membrane as a helical span at residues 23–43 (DYWAFGISGLLLIAAIVIMGV). Residues 44-142 (RGFNWGLDFT…FVGPSVGADL (99 aa)) lie on the Periplasmic side of the membrane. Residues 143 to 163 (AQTGAMALMAALLSILVYVGF) form a helical membrane-spanning segment. At 164–170 (RFEWRLA) the chain is on the cytoplasmic side. A helical transmembrane segment spans residues 171–191 (AGVVIALAHDVIITLGILSLF). Residues 192-196 (HIEID) lie on the Periplasmic side of the membrane. A helical membrane pass occupies residues 197–217 (LTIVASLMSVIGYSLNDSIVV). Residues 218–247 (SDRIRENFRKIRRGTPYEIFNVSLTQTLHR) lie on the Cytoplasmic side of the membrane. A helical transmembrane segment spans residues 248-270 (TLITSGTTLMVILMLYLFGGPVL). Over 271–280 (EGFSLTMLIG) the chain is Periplasmic. The helical transmembrane segment at 281 to 301 (VSIGTASSIYVASALALKLGM) threads the bilayer. The Cytoplasmic segment spans residues 302 to 323 (KREHMLQQKVEKEGADQPSILP).

The protein belongs to the SecD/SecF family. SecF subfamily. As to quaternary structure, forms a complex with SecD. Part of the essential Sec protein translocation apparatus which comprises SecA, SecYEG and auxiliary proteins SecDF-YajC and YidC.

It localises to the cell inner membrane. In terms of biological role, part of the Sec protein translocase complex. Interacts with the SecYEG preprotein conducting channel. SecDF uses the proton motive force (PMF) to complete protein translocation after the ATP-dependent function of SecA. The polypeptide is Protein translocase subunit SecF (Escherichia coli O157:H7).